The sequence spans 290 residues: GTPase Era (290 aa).

Positions 2–169 constitute an Era-type G domain; sequence KSGFVSIIGR…KDKIYENLQE (168 aa). A G1 region spans residues 10–17; sequence GRPSTGKS. Position 10–17 (10–17) interacts with GTP; the sequence is GRPSTGKS. The interval 36–40 is G2; sequence QTTRN. The segment at 57–60 is G3; that stretch reads DTPG. Residues 57–61 and 119–122 contribute to the GTP site; these read DTPGF and NKID. The segment at 119–122 is G4; it reads NKID. A G5 region spans residues 148–150; sequence ISA. Residues 200 to 276 enclose the KH type-2 domain; it reads LKEELPYSLY…DLFLQVKLRK (77 aa).

It belongs to the TRAFAC class TrmE-Era-EngA-EngB-Septin-like GTPase superfamily. Era GTPase family. Monomer.

The protein resides in the cytoplasm. It localises to the cell inner membrane. Its function is as follows. An essential GTPase that binds both GDP and GTP, with rapid nucleotide exchange. Plays a role in 16S rRNA processing and 30S ribosomal subunit biogenesis and possibly also in cell cycle regulation and energy metabolism. This is GTPase Era from Borrelia turicatae (strain 91E135).